The following is a 100-amino-acid chain: Small ribosomal subunit protein uS14c (100 aa).

The protein belongs to the universal ribosomal protein uS14 family. Part of the 30S ribosomal subunit.

It is found in the plastid. The protein resides in the chloroplast. Binds 16S rRNA, required for the assembly of 30S particles. This is Small ribosomal subunit protein uS14c from Eucalyptus globulus subsp. globulus (Tasmanian blue gum).